We begin with the raw amino-acid sequence, 459 residues long: Cysteine--tRNA ligase (459 aa).

Cysteine 28 contributes to the Zn(2+) binding site. Positions valine 30 to histidine 40 match the 'HIGH' region motif. Zn(2+)-binding residues include cysteine 209, histidine 234, and glutamate 238. The 'KMSKS' region motif lies at lysine 266 to serine 270. Residue lysine 269 coordinates ATP.

It belongs to the class-I aminoacyl-tRNA synthetase family. Monomer. Zn(2+) serves as cofactor.

The protein resides in the cytoplasm. The catalysed reaction is tRNA(Cys) + L-cysteine + ATP = L-cysteinyl-tRNA(Cys) + AMP + diphosphate. This Shewanella amazonensis (strain ATCC BAA-1098 / SB2B) protein is Cysteine--tRNA ligase.